A 342-amino-acid chain; its full sequence is Protein pelota homolog (342 aa).

This sequence belongs to the eukaryotic release factor 1 family. Pelota subfamily. In terms of assembly, monomer. A divalent metal cation serves as cofactor.

It localises to the cytoplasm. Functionally, may function in recognizing stalled ribosomes, interact with stem-loop structures in stalled mRNA molecules, and effect endonucleolytic cleavage of the mRNA. May play a role in the release non-functional ribosomes and degradation of damaged mRNAs. Has endoribonuclease activity. The sequence is that of Protein pelota homolog from Methanocorpusculum labreanum (strain ATCC 43576 / DSM 4855 / Z).